A 44-amino-acid polypeptide reads, in one-letter code: Large ribosomal subunit protein bL34 (44 aa).

The disordered stretch occupies residues 1-26; the sequence is MKMTFQPKKRQRAKVHGFRQRMKTAG. The span at 7 to 22 shows a compositional bias: basic residues; that stretch reads PKKRQRAKVHGFRQRM.

It belongs to the bacterial ribosomal protein bL34 family.

This is Large ribosomal subunit protein bL34 from Agathobacter rectalis (strain ATCC 33656 / DSM 3377 / JCM 17463 / KCTC 5835 / VPI 0990) (Eubacterium rectale).